The sequence spans 511 residues: Rab proteins geranylgeranyltransferase component A (511 aa).

This sequence belongs to the Rab GDI family.

The protein localises to the cytoplasm. Its subcellular location is the perinuclear region. It localises to the cytoskeleton. The protein resides in the spindle pole. Binds unprenylated Rab proteins, presents it to the catalytic component B, and remains bound to it after the geranylgeranyl transfer reaction. The component A is thought to be regenerated by transferring its prenylated Rab to a protein acceptor. This chain is Rab proteins geranylgeranyltransferase component A, found in Drosophila melanogaster (Fruit fly).